The following is a 641-amino-acid chain: tRNA 5-methylaminomethyl-2-thiouridine biosynthesis bifunctional protein MnmC (641 aa).

Residues 1–219 (MTVSKILKQI…PYPICSAAVT (219 aa)) are tRNA (mnm(5)s(2)U34)-methyltransferase. An FAD-dependent cmnm(5)s(2)U34 oxidoreductase region spans residues 232-641 (IGGGVASACL…GKALEVGVEV (410 aa)).

It in the N-terminal section; belongs to the methyltransferase superfamily. tRNA (mnm(5)s(2)U34)-methyltransferase family. In the C-terminal section; belongs to the DAO family. FAD is required as a cofactor.

It localises to the cytoplasm. It carries out the reaction 5-aminomethyl-2-thiouridine(34) in tRNA + S-adenosyl-L-methionine = 5-methylaminomethyl-2-thiouridine(34) in tRNA + S-adenosyl-L-homocysteine + H(+). Its function is as follows. Catalyzes the last two steps in the biosynthesis of 5-methylaminomethyl-2-thiouridine (mnm(5)s(2)U) at the wobble position (U34) in tRNA. Catalyzes the FAD-dependent demodification of cmnm(5)s(2)U34 to nm(5)s(2)U34, followed by the transfer of a methyl group from S-adenosyl-L-methionine to nm(5)s(2)U34, to form mnm(5)s(2)U34. The sequence is that of tRNA 5-methylaminomethyl-2-thiouridine biosynthesis bifunctional protein MnmC from Shewanella pealeana (strain ATCC 700345 / ANG-SQ1).